A 518-amino-acid chain; its full sequence is Membrane-bound glycerophospholipid O-acyltransferase 2 (518 aa).

6 consecutive transmembrane segments (helical) span residues 21–41, 60–80, 87–107, 183–203, 230–250, and 267–283; these read PVDQVNFVVCQLFALLAAIWF, TLLGLYLALFCFGWYALHFVI, YLMIIIGVENMHKYCFVFALG, FMGILAGPLCSYKDYITFIEG, IAVAQKLLICGLSLLFHMTIT, and ASWPVRVFYLYLSLMAA. Active-site residues include N341 and H372. Helical transmembrane passes span 365-385, 415-435, and 443-463; these read FILSAIWHGVYPGYYLTFLTG, IITWMTTQVAISYTVVPFVLL, and FYSSCYFCLHIASILVLLVFP.

The protein belongs to the membrane-bound acyltransferase family.

It localises to the endoplasmic reticulum membrane. The enzyme catalyses a 1-acyl-sn-glycero-3-phosphocholine + an acyl-CoA = a 1,2-diacyl-sn-glycero-3-phosphocholine + CoA. It catalyses the reaction a 1-acyl-sn-glycero-3-phosphoethanolamine + an acyl-CoA = a 1,2-diacyl-sn-glycero-3-phosphoethanolamine + CoA. It carries out the reaction a 1-acyl-sn-glycero-3-phosphate + an acyl-CoA = a 1,2-diacyl-sn-glycero-3-phosphate + CoA. The catalysed reaction is (9Z)-hexadecenoyl-CoA + 1-hexadecanoyl-sn-glycero-3-phosphocholine = 1-hexadecanoyl-2-(9Z-hexadecenoyl)-sn-glycero-3-phosphocholine + CoA. The enzyme catalyses 1-hexadecanoyl-sn-glycero-3-phosphoethanolamine + (9Z)-octadecenoyl-CoA = 1-hexadecanoyl-2-(9Z-octadecenoyl)-sn-glycero-3-phosphoethanolamine + CoA. It catalyses the reaction 1-hexadecanoyl-sn-glycero-3-phosphoethanolamine + (9Z)-hexadecenoyl-CoA = 1-hexadecanoyl-2-(9Z)-hexadecenoyl-sn-glycero-3-phosphoethanolamine + CoA. It carries out the reaction 1-(9Z-octadecenoyl)-sn-glycero-3-phospho-L-serine + hexadecanoyl-CoA = 1-(9Z)-octadecenoyl-2-hexadecanoyl-sn-glycero-3-phosphoserine + CoA. The catalysed reaction is (9Z,12Z)-octadecadienoyl-CoA + 1-hexadecanoyl-sn-glycero-3-phosphocholine = 1-hexadecanoyl-2-(9Z,12Z-octadecadienoyl)-sn-glycero-3-phosphocholine + CoA. The enzyme catalyses 1-hexadecanoyl-sn-glycero-3-phosphocholine + (9Z)-octadecenoyl-CoA = 1-hexadecanoyl-2-(9Z-octadecenoyl)-sn-glycero-3-phosphocholine + CoA. It catalyses the reaction 1-hexadecanoyl-sn-glycero-3-phosphate + (9Z)-hexadecenoyl-CoA = 1-hexadecanoyl-2-[(9Z)-hexadec-9-enoyl]-sn-glycero-3-phosphate + CoA. It carries out the reaction 1-hexadecanoyl-sn-glycero-3-phosphate + (9Z)-octadecenoyl-CoA = 1-hexadecanoyl-2-(9Z-octadecenoyl)-sn-glycero-3-phosphate + CoA. The catalysed reaction is a 1-O-(1Z-alkenyl)-sn-glycero-3-phosphocholine + (9Z)-octadecenoyl-CoA = 1-O-(1Z)-alkenyl-2-(9Z)-octadecenoyl-sn-glycero-3-phosphocholine + CoA. The enzyme catalyses a 1-O-(1Z-alkenyl)-sn-glycero-3-phosphoethanolamine + (9Z)-octadecenoyl-CoA = 1-O-(1Z)-alkenyl-2-(9Z)-octadecenoyl-sn-glycero-3-phosphoethanolamine + CoA. It catalyses the reaction 1-octadecanoyl-sn-glycero-3-phosphoethanolamine + (9Z)-octadecenoyl-CoA = 1-octadecanoyl-2-(9Z-octadecenoyl)-sn-glycero-3-phosphoethanolamine + CoA. It carries out the reaction 1-octadecanoyl-sn-glycero-3-phosphocholine + (9Z)-octadecenoyl-CoA = 1-octadecanoyl-2-(9Z-octadecenoyl)-sn-glycero-3-phosphocholine + CoA. The catalysed reaction is 1-(9Z-octadecenoyl)-sn-glycero-3-phosphoethanolamine + (9Z)-octadecenoyl-CoA = 1,2-di-(9Z-octadecenoyl)-sn-glycero-3-phosphoethanolamine + CoA. It functions in the pathway lipid metabolism; phospholipid metabolism. In terms of biological role, acyltransferase which catalyzes the transfer of an acyl group from an acyl-CoA to a lysophospholipid leading to the production of a phospholipid and participates in the reacylation step of the phospholipid remodeling pathway also known as the Lands cycle. May catalyze preferentially the acylation of lysophosphatidylethanolamine (1-acyl-sn-glycero-3-phosphoethanolamine or LPE) and lysophosphatidic acid (LPA) and to a lesser extend lysophosphatidylcholine (LPC) and lysophosphatidylserine (LPS). Prefers oleoyl-CoA as the acyl donor. This chain is Membrane-bound glycerophospholipid O-acyltransferase 2, found in Gallus gallus (Chicken).